A 169-amino-acid polypeptide reads, in one-letter code: Disulfide bond formation protein B 1 (169 aa).

Topologically, residues 1-14 are cytoplasmic; it reads MSDDRLGLGRERRF. Residues 15–31 traverse the membrane as a helical segment; the sequence is LVLLGIICLALIGGALY. The Periplasmic segment spans residues 32–49; it reads MQVVLGEAPCPLCILQRY. A disulfide bridge connects residues cysteine 41 and cysteine 44. Residues 50-64 traverse the membrane as a helical segment; sequence ALLLIALFAFIGAAM. At 65 to 71 the chain is on the cytoplasmic side; that stretch reads SSRRGVT. A helical transmembrane segment spans residues 72-89; the sequence is VMETLVVICALAGAGVAG. Topologically, residues 90-144 are periplasmic; sequence HHVYTQFYPSVSCGIDVLQPIVDSLPLAKIFPLGFQVDGFCSTPYPPILGLSLAQ. Cysteines 102 and 130 form a disulfide. Residues 145-163 traverse the membrane as a helical segment; that stretch reads WALVAFVLTVILVPLGVVR. The Cytoplasmic segment spans residues 164–169; that stretch reads NRKKTY.

It belongs to the DsbB family.

Its subcellular location is the cell inner membrane. In terms of biological role, required for disulfide bond formation in some periplasmic proteins. Acts by oxidizing the DsbA protein. This chain is Disulfide bond formation protein B 1, found in Pseudomonas fluorescens (strain ATCC BAA-477 / NRRL B-23932 / Pf-5).